Here is a 113-residue protein sequence, read N- to C-terminus: MRHYEIIFMVHPDQSDKIPLLIEKYKKIINDNNGIIHRLEDWGRRQLSYSINKLQKAHYILMNIEVFPKTITLLETDFRFNNIILRNMIMSVKKAIVELSPILKLKDDKKEKK.

The protein belongs to the bacterial ribosomal protein bS6 family.

In terms of biological role, binds together with bS18 to 16S ribosomal RNA. The protein is Small ribosomal subunit protein bS6 (rpsF) of Buchnera aphidicola subsp. Acyrthosiphon pisum (strain APS) (Acyrthosiphon pisum symbiotic bacterium).